The sequence spans 122 residues: Large ribosomal subunit protein uL14 (122 aa).

Belongs to the universal ribosomal protein uL14 family. In terms of assembly, part of the 50S ribosomal subunit. Forms a cluster with proteins L3 and L19. In the 70S ribosome, L14 and L19 interact and together make contacts with the 16S rRNA in bridges B5 and B8.

Its function is as follows. Binds to 23S rRNA. Forms part of two intersubunit bridges in the 70S ribosome. This Limosilactobacillus reuteri (strain DSM 20016) (Lactobacillus reuteri) protein is Large ribosomal subunit protein uL14.